A 630-amino-acid chain; its full sequence is UvrABC system protein C (630 aa).

Residues 18–97 enclose the GIY-YIG domain; that stretch reads TQSGVYLMKN…IKKHRPKYNI (80 aa). The UVR domain maps to 207 to 242; it reads KKVIKSMTEKMMGAADEEKFEVAARLRDSIEAIKAI.

It belongs to the UvrC family. In terms of assembly, interacts with UvrB in an incision complex.

The protein localises to the cytoplasm. Functionally, the UvrABC repair system catalyzes the recognition and processing of DNA lesions. UvrC both incises the 5' and 3' sides of the lesion. The N-terminal half is responsible for the 3' incision and the C-terminal half is responsible for the 5' incision. In Bdellovibrio bacteriovorus (strain ATCC 15356 / DSM 50701 / NCIMB 9529 / HD100), this protein is UvrABC system protein C.